The primary structure comprises 413 residues: ATP-dependent RNA helicase RhlB (413 aa).

Positions glutamine 9–alanine 37 match the Q motif motif. The 178-residue stretch at leucine 40 to isoleucine 217 folds into the Helicase ATP-binding domain. Alanine 53–threonine 60 contributes to the ATP binding site. Positions aspartate 163–aspartate 166 match the DEAD box motif. In terms of domain architecture, Helicase C-terminal spans lysine 241–isoleucine 388.

This sequence belongs to the DEAD box helicase family. RhlB subfamily. Component of the RNA degradosome, which is a multiprotein complex involved in RNA processing and mRNA degradation.

It localises to the cytoplasm. It carries out the reaction ATP + H2O = ADP + phosphate + H(+). Functionally, DEAD-box RNA helicase involved in RNA degradation. Has RNA-dependent ATPase activity and unwinds double-stranded RNA. This chain is ATP-dependent RNA helicase RhlB, found in Actinobacillus succinogenes (strain ATCC 55618 / DSM 22257 / CCUG 43843 / 130Z).